We begin with the raw amino-acid sequence, 308 residues long: Porphobilinogen deaminase (308 aa).

Residue Cys241 is modified to S-(dipyrrolylmethanemethyl)cysteine.

It belongs to the HMBS family. Monomer. Dipyrromethane is required as a cofactor.

The enzyme catalyses 4 porphobilinogen + H2O = hydroxymethylbilane + 4 NH4(+). It participates in porphyrin-containing compound metabolism; protoporphyrin-IX biosynthesis; coproporphyrinogen-III from 5-aminolevulinate: step 2/4. Its function is as follows. Tetrapolymerization of the monopyrrole PBG into the hydroxymethylbilane pre-uroporphyrinogen in several discrete steps. This Exiguobacterium sibiricum (strain DSM 17290 / CCUG 55495 / CIP 109462 / JCM 13490 / 255-15) protein is Porphobilinogen deaminase.